The primary structure comprises 332 residues: NADH-quinone oxidoreductase subunit H (332 aa).

9 consecutive transmembrane segments (helical) span residues 4-24 (FAFF…IFAS), 44-64 (IGPD…MIKL), 78-98 (FIFA…LAAI), 120-140 (VALL…FLGG), 165-185 (VGAL…LVDI), 194-214 (FSWL…ALFI), 255-275 (IAGA…FWII), 279-299 (IMMI…RAAF), and 312-332 (YLIL…AVLL).

Belongs to the complex I subunit 1 family. NDH-1 is composed of 14 different subunits. Subunits NuoA, H, J, K, L, M, N constitute the membrane sector of the complex.

It localises to the cell inner membrane. It carries out the reaction a quinone + NADH + 5 H(+)(in) = a quinol + NAD(+) + 4 H(+)(out). NDH-1 shuttles electrons from NADH, via FMN and iron-sulfur (Fe-S) centers, to quinones in the respiratory chain. The immediate electron acceptor for the enzyme in this species is believed to be ubiquinone. Couples the redox reaction to proton translocation (for every two electrons transferred, four hydrogen ions are translocated across the cytoplasmic membrane), and thus conserves the redox energy in a proton gradient. This subunit may bind ubiquinone. This Campylobacter jejuni subsp. doylei (strain ATCC BAA-1458 / RM4099 / 269.97) protein is NADH-quinone oxidoreductase subunit H.